The following is a 626-amino-acid chain: Putative ankyrin repeat protein R837 (626 aa).

ANK repeat units lie at residues 42 to 72, 80 to 109, 110 to 139, 140 to 169, 171 to 199, 201 to 230, 242 to 269, 270 to 298, 299 to 328, 330 to 358, 393 to 416, 417 to 446, 452 to 479, 480 to 509, 510 to 539, 540 to 569, 570 to 599, and 601 to 626; these read EYFN…GLIR, TLNT…NHRY, SEDK…NIKS, RNNY…DITV, DYEV…DIKK, NKKR…DVYR, KNYK…YQLS, DTNN…LHEL, NLNQ…DINT, GNSC…RLTS, TIMS…KSSL, DYES…ITKQ, INNS…GINI, CINY…NINE, FGDL…NIYI, IKDN…DYHK, KNEL…KTKT, and FFDP…NEIK.

The chain is Putative ankyrin repeat protein R837 from Acanthamoeba polyphaga (Amoeba).